The chain runs to 187 residues: Elongation factor P (187 aa).

Position 34 is an N6-(3,6-diaminohexanoyl)-5-hydroxylysine (Lys34).

The protein belongs to the elongation factor P family. Post-translationally, may be beta-lysylated on the epsilon-amino group of Lys-34 by the combined action of EpmA and EpmB, and then hydroxylated on the C5 position of the same residue by EpmC (if this protein is present). Lysylation is critical for the stimulatory effect of EF-P on peptide-bond formation. The lysylation moiety may extend toward the peptidyltransferase center and stabilize the terminal 3-CCA end of the tRNA. Hydroxylation of the C5 position on Lys-34 may allow additional potential stabilizing hydrogen-bond interactions with the P-tRNA.

It localises to the cytoplasm. It participates in protein biosynthesis; polypeptide chain elongation. Involved in peptide bond synthesis. Alleviates ribosome stalling that occurs when 3 or more consecutive Pro residues or the sequence PPG is present in a protein, possibly by augmenting the peptidyl transferase activity of the ribosome. Modification of Lys-34 is required for alleviation. This chain is Elongation factor P, found in Buchnera aphidicola subsp. Schizaphis graminum (strain Sg).